Reading from the N-terminus, the 214-residue chain is Protein get-1 (214 aa).

The Lumenal segment spans residues Met-1–Leu-4. A helical transmembrane segment spans residues Leu-5 to Ala-24. Residues Thr-25 to Arg-110 are Cytoplasmic-facing. The stretch at Lys-73–Thr-107 forms a coiled coil. A helical transmembrane segment spans residues Val-111–Phe-131. Residues Trp-132–Ser-155 are Lumenal-facing. The chain crosses the membrane as a helical span at residues Val-156 to Val-172. The Cytoplasmic portion of the chain corresponds to Ile-173–Lys-214. Residues Gln-190–Lys-214 are disordered.

This sequence belongs to the WRB/GET1 family. As to quaternary structure, interacts with GET3.

The protein resides in the endoplasmic reticulum membrane. Required for the post-translational delivery of tail-anchored (TA) proteins to the endoplasmic reticulum. Acts as a membrane receptor for soluble GET3, which recognizes and selectively binds the transmembrane domain of TA proteins in the cytosol. The chain is Protein get-1 (get-1) from Neurospora crassa (strain ATCC 24698 / 74-OR23-1A / CBS 708.71 / DSM 1257 / FGSC 987).